The following is a 146-amino-acid chain: Prepilin peptidase-dependent protein D (146 aa).

The propeptide at 1–6 is leader sequence; it reads MDKQRG. Phenylalanine 7 is subject to N-methylphenylalanine. A helical membrane pass occupies residues 7–27; that stretch reads FTLIELMVVIGIIAILSAIGI.

The protein belongs to the N-Me-Phe pilin family.

It localises to the fimbrium. The protein resides in the membrane. In terms of biological role, major component of the type IV pilus (T4P) that plays a role in cell adhesion and motility. Not produced when grown under standard laboratory conditions. This Escherichia coli (strain K12) protein is Prepilin peptidase-dependent protein D (ppdD).